The chain runs to 374 residues: Type II methyltransferase M.BbvI (374 aa).

The 345-residue stretch at 3–347 folds into the SAM-dependent MTase C5-type domain; sequence FRKGELFCGP…EAVLKTFARI (345 aa). Residue C92 is part of the active site.

The protein belongs to the class I-like SAM-binding methyltransferase superfamily. C5-methyltransferase family.

It catalyses the reaction a 2'-deoxycytidine in DNA + S-adenosyl-L-methionine = a 5-methyl-2'-deoxycytidine in DNA + S-adenosyl-L-homocysteine + H(+). Functionally, a methylase, recognizes the double-stranded sequence 5'-GCAGC-3', methylates C-2 on both strands, and protects the DNA from cleavage by the BbvI endonuclease. This chain is Type II methyltransferase M.BbvI (bbvIM), found in Brevibacillus brevis (Bacillus brevis).